A 590-amino-acid chain; its full sequence is Tape measure protein (590 aa).

3 disordered regions span residues 1-35, 147-185, and 515-535; these read MKKPQEMQTMRRKVISDNKPTQEAAKSASNTLSGL, ESVGPLLPAPEAVNNDPDADFFPTPQPVEPKQESPEEKQ, and LKKNQPNAKPETSAKSPEAKQ. The span at 176-185 shows a compositional bias: basic and acidic residues; the sequence is PKQESPEEKQ.

It localises to the virion. Serves as a base for tail tube protein polymerization and acts as a template for tail length determination. This is Tape measure protein (29) from Escherichia coli (Bacteriophage T4).